Reading from the N-terminus, the 221-residue chain is MTDTAQPRPRTRLYLITPPQIGDVSAFRKSLEETLSAGDVASLQLRLKGQDGMIDMQATQEVGAAVTAMAQEAGVAVLINDAAELSRQLGADGVHLGWDDMPVKTARALLGPDAIIGATAKNSYHRAMQAGEDGADYVAFGAFYPTTTKEGTIPAELELLEVWQSAMILPCVAIGGITVSNAAPLVTAGADFLAVSSGVWNHEDGPAAAVRAFNALFESLA.

Residues 44-48 (QLRLK) and N80 each bind 4-amino-2-methyl-5-(diphosphooxymethyl)pyrimidine. D81 and D100 together coordinate Mg(2+). 4-amino-2-methyl-5-(diphosphooxymethyl)pyrimidine is bound at residue T119. Residue 146–148 (TTT) coordinates 2-[(2R,5Z)-2-carboxy-4-methylthiazol-5(2H)-ylidene]ethyl phosphate. A 4-amino-2-methyl-5-(diphosphooxymethyl)pyrimidine-binding site is contributed by K149. G176 contributes to the 2-[(2R,5Z)-2-carboxy-4-methylthiazol-5(2H)-ylidene]ethyl phosphate binding site.

Belongs to the thiamine-phosphate synthase family. Mg(2+) is required as a cofactor.

It catalyses the reaction 2-[(2R,5Z)-2-carboxy-4-methylthiazol-5(2H)-ylidene]ethyl phosphate + 4-amino-2-methyl-5-(diphosphooxymethyl)pyrimidine + 2 H(+) = thiamine phosphate + CO2 + diphosphate. The enzyme catalyses 2-(2-carboxy-4-methylthiazol-5-yl)ethyl phosphate + 4-amino-2-methyl-5-(diphosphooxymethyl)pyrimidine + 2 H(+) = thiamine phosphate + CO2 + diphosphate. It carries out the reaction 4-methyl-5-(2-phosphooxyethyl)-thiazole + 4-amino-2-methyl-5-(diphosphooxymethyl)pyrimidine + H(+) = thiamine phosphate + diphosphate. The protein operates within cofactor biosynthesis; thiamine diphosphate biosynthesis; thiamine phosphate from 4-amino-2-methyl-5-diphosphomethylpyrimidine and 4-methyl-5-(2-phosphoethyl)-thiazole: step 1/1. Functionally, condenses 4-methyl-5-(beta-hydroxyethyl)thiazole monophosphate (THZ-P) and 2-methyl-4-amino-5-hydroxymethyl pyrimidine pyrophosphate (HMP-PP) to form thiamine monophosphate (TMP). The chain is Thiamine-phosphate synthase from Hyphomonas neptunium (strain ATCC 15444).